A 311-amino-acid polypeptide reads, in one-letter code: Phospho-N-acetylmuramoyl-pentapeptide-transferase (311 aa).

10 consecutive transmembrane segments (helical) span residues 2–22, 48–68, 74–94, 104–124, 144–164, 168–188, 192–212, 214–234, 237–257, and 288–308; these read ENNV…IEGF, GTPT…LLNF, SFLI…DDFM, ITAV…VYFI, LGWF…NAVN, GVDG…LIVG, VVYL…WHPA, IFMG…SFAL, LELF…SVII, and KIAF…IIGW.

Belongs to the glycosyltransferase 4 family. MraY subfamily. It depends on Mg(2+) as a cofactor.

It is found in the cell inner membrane. It catalyses the reaction UDP-N-acetyl-alpha-D-muramoyl-L-alanyl-gamma-D-glutamyl-meso-2,6-diaminopimeloyl-D-alanyl-D-alanine + di-trans,octa-cis-undecaprenyl phosphate = di-trans,octa-cis-undecaprenyl diphospho-N-acetyl-alpha-D-muramoyl-L-alanyl-D-glutamyl-meso-2,6-diaminopimeloyl-D-alanyl-D-alanine + UMP. Its pathway is cell wall biogenesis; peptidoglycan biosynthesis. Catalyzes the initial step of the lipid cycle reactions in the biosynthesis of the cell wall peptidoglycan: transfers peptidoglycan precursor phospho-MurNAc-pentapeptide from UDP-MurNAc-pentapeptide onto the lipid carrier undecaprenyl phosphate, yielding undecaprenyl-pyrophosphoryl-MurNAc-pentapeptide, known as lipid I. The sequence is that of Phospho-N-acetylmuramoyl-pentapeptide-transferase from Kosmotoga olearia (strain ATCC BAA-1733 / DSM 21960 / TBF 19.5.1).